The primary structure comprises 169 residues: S-ribosylhomocysteine lyase (169 aa).

3 residues coordinate Fe cation: histidine 54, histidine 58, and cysteine 128.

It belongs to the LuxS family. Homodimer. Fe cation serves as cofactor.

The enzyme catalyses S-(5-deoxy-D-ribos-5-yl)-L-homocysteine = (S)-4,5-dihydroxypentane-2,3-dione + L-homocysteine. In terms of biological role, involved in the synthesis of autoinducer 2 (AI-2) which is secreted by bacteria and is used to communicate both the cell density and the metabolic potential of the environment. The regulation of gene expression in response to changes in cell density is called quorum sensing. Catalyzes the transformation of S-ribosylhomocysteine (RHC) to homocysteine (HC) and 4,5-dihydroxy-2,3-pentadione (DPD). The chain is S-ribosylhomocysteine lyase from Aeromonas hydrophila subsp. hydrophila (strain ATCC 7966 / DSM 30187 / BCRC 13018 / CCUG 14551 / JCM 1027 / KCTC 2358 / NCIMB 9240 / NCTC 8049).